Here is a 72-residue protein sequence, read N- to C-terminus: Translation initiation factor IF-1 (72 aa).

The 72-residue stretch at Met1–Lys72 folds into the S1-like domain. Tyr60 carries the phosphotyrosine modification.

This sequence belongs to the IF-1 family. Component of the 30S ribosomal translation pre-initiation complex which assembles on the 30S ribosome in the order IF-2 and IF-3, IF-1 and N-formylmethionyl-tRNA(fMet); mRNA recruitment can occur at any time during PIC assembly.

The protein resides in the cytoplasm. In terms of biological role, one of the essential components for the initiation of protein synthesis. Stabilizes the binding of IF-2 and IF-3 on the 30S subunit to which N-formylmethionyl-tRNA(fMet) subsequently binds. Helps modulate mRNA selection, yielding the 30S pre-initiation complex (PIC). Upon addition of the 50S ribosomal subunit IF-1, IF-2 and IF-3 are released leaving the mature 70S translation initiation complex. The chain is Translation initiation factor IF-1 from Shouchella clausii (strain KSM-K16) (Alkalihalobacillus clausii).